Consider the following 614-residue polypeptide: Acid phosphatase (614 aa).

Residues 1–22 form the signal peptide; sequence MKGTAASALLVALSATAAQARP. Positions 80–176 constitute a Fibronectin type-III domain; sequence IPKGMHIHYQ…EVLSFKTSRP (97 aa). N-linked (GlcNAc...) asparagine glycosylation is found at asparagine 110, asparagine 161, asparagine 242, asparagine 295, asparagine 333, asparagine 340, asparagine 352, asparagine 408, asparagine 429, asparagine 512, asparagine 523, asparagine 559, and asparagine 578. The propeptide occupies 606–614; sequence VAGGKKLHS.

Monomer. Requires Cu cation as cofactor. In terms of processing, glycosylated; probably with N-linked high-mannose oligosaccharides.

It is found in the secreted. The enzyme catalyses a phosphate monoester + H2O = an alcohol + phosphate. Competitively inhibited by phosphomycin and inorganic orthophosphate. The polypeptide is Acid phosphatase (aphA) (Aspergillus ficuum).